The primary structure comprises 275 residues: Phosphatidylglycerol--prolipoprotein diacylglyceryl transferase (275 aa).

Helical transmembrane passes span 20–40 (FTIH…LLLA), 58–78 (LLWA…VFQW), 88–108 (IIAI…GFIV), and 118–138 (LSSW…QGIG). An a 1,2-diacyl-sn-glycero-3-phospho-(1'-sn-glycerol)-binding site is contributed by arginine 139. 2 helical membrane-spanning segments follow: residues 209 to 229 (GEIF…IEGM) and 239 to 259 (IRIS…ILII).

The protein belongs to the Lgt family.

Its subcellular location is the cell membrane. The enzyme catalyses L-cysteinyl-[prolipoprotein] + a 1,2-diacyl-sn-glycero-3-phospho-(1'-sn-glycerol) = an S-1,2-diacyl-sn-glyceryl-L-cysteinyl-[prolipoprotein] + sn-glycerol 1-phosphate + H(+). The protein operates within protein modification; lipoprotein biosynthesis (diacylglyceryl transfer). Its function is as follows. Catalyzes the transfer of the diacylglyceryl group from phosphatidylglycerol to the sulfhydryl group of the N-terminal cysteine of a prolipoprotein, the first step in the formation of mature lipoproteins. In Limosilactobacillus reuteri (strain DSM 20016) (Lactobacillus reuteri), this protein is Phosphatidylglycerol--prolipoprotein diacylglyceryl transferase.